Consider the following 70-residue polypeptide: Protein FlmC (70 aa).

Its function is as follows. Component of a type I toxin-antitoxin (TA) system. Either this protein or sequences upstream of it are required for translation of downstream flmA; this could be translationally coupled to flmA. In Escherichia coli (strain K12), this protein is Protein FlmC (flmC).